The sequence spans 146 residues: 3-hydroxyacyl-[acyl-carrier-protein] dehydratase FabZ (146 aa).

Residue His48 is part of the active site.

It belongs to the thioester dehydratase family. FabZ subfamily.

It is found in the cytoplasm. It carries out the reaction a (3R)-hydroxyacyl-[ACP] = a (2E)-enoyl-[ACP] + H2O. Involved in unsaturated fatty acids biosynthesis. Catalyzes the dehydration of short chain beta-hydroxyacyl-ACPs and long chain saturated and unsaturated beta-hydroxyacyl-ACPs. In Campylobacter jejuni subsp. jejuni serotype O:6 (strain 81116 / NCTC 11828), this protein is 3-hydroxyacyl-[acyl-carrier-protein] dehydratase FabZ.